Consider the following 95-residue polypeptide: Small ribosomal subunit protein bS6 (95 aa).

It belongs to the bacterial ribosomal protein bS6 family.

Binds together with bS18 to 16S ribosomal RNA. This chain is Small ribosomal subunit protein bS6, found in Clostridium beijerinckii (strain ATCC 51743 / NCIMB 8052) (Clostridium acetobutylicum).